Here is a 279-residue protein sequence, read N- to C-terminus: Biotin synthase (279 aa).

The Radical SAM core domain occupies 1–227 (MKVYLCAISN…NAMIMVAGGR (227 aa)). 3 residues coordinate [4Fe-4S] cluster: cysteine 16, cysteine 20, and cysteine 23. [2Fe-2S] cluster-binding residues include cysteine 60, cysteine 95, and cysteine 153.

Belongs to the radical SAM superfamily. Biotin synthase family. As to quaternary structure, homodimer. Requires [4Fe-4S] cluster as cofactor. It depends on [2Fe-2S] cluster as a cofactor.

The catalysed reaction is (4R,5S)-dethiobiotin + (sulfur carrier)-SH + 2 reduced [2Fe-2S]-[ferredoxin] + 2 S-adenosyl-L-methionine = (sulfur carrier)-H + biotin + 2 5'-deoxyadenosine + 2 L-methionine + 2 oxidized [2Fe-2S]-[ferredoxin]. Its pathway is cofactor biosynthesis; biotin biosynthesis; biotin from 7,8-diaminononanoate: step 2/2. Catalyzes the conversion of dethiobiotin (DTB) to biotin by the insertion of a sulfur atom into dethiobiotin via a radical-based mechanism. The sequence is that of Biotin synthase from Nitratiruptor sp. (strain SB155-2).